The primary structure comprises 467 residues: Phosphomethylpyrimidine synthase (467 aa).

Substrate-binding positions include N80, M109, Y139, H175, 195 to 197, 236 to 239, and E275; these read SRG and DSLR. H279 contributes to the Zn(2+) binding site. Y302 contacts substrate. H343 contacts Zn(2+). Residues C423, C426, and C431 each coordinate [4Fe-4S] cluster.

This sequence belongs to the ThiC family. Requires [4Fe-4S] cluster as cofactor.

It carries out the reaction 5-amino-1-(5-phospho-beta-D-ribosyl)imidazole + S-adenosyl-L-methionine = 4-amino-2-methyl-5-(phosphooxymethyl)pyrimidine + CO + 5'-deoxyadenosine + formate + L-methionine + 3 H(+). It participates in cofactor biosynthesis; thiamine diphosphate biosynthesis. Functionally, catalyzes the synthesis of the hydroxymethylpyrimidine phosphate (HMP-P) moiety of thiamine from aminoimidazole ribotide (AIR) in a radical S-adenosyl-L-methionine (SAM)-dependent reaction. This chain is Phosphomethylpyrimidine synthase, found in Synechococcus sp. (strain WH7803).